A 585-amino-acid polypeptide reads, in one-letter code: Adenine deaminase (585 aa).

Belongs to the metallo-dependent hydrolases superfamily. Adenine deaminase family. The cofactor is Mn(2+).

It carries out the reaction adenine + H2O + H(+) = hypoxanthine + NH4(+). The sequence is that of Adenine deaminase from Halalkalibacterium halodurans (strain ATCC BAA-125 / DSM 18197 / FERM 7344 / JCM 9153 / C-125) (Bacillus halodurans).